Reading from the N-terminus, the 421-residue chain is CinA-like protein (421 aa).

It belongs to the CinA family.

The polypeptide is CinA-like protein (Mycobacterium sp. (strain JLS)).